We begin with the raw amino-acid sequence, 994 residues long: Sarcoplasmic/endoplasmic reticulum calcium ATPase 1 (994 aa).

The Cytoplasmic portion of the chain corresponds to 1 to 48 (MEAAHSKSTEECLSYFGVSETTGLTPDQVKRHLEKYGPNELPAEEGKS). Residues 49–69 (LWELVVEQFEDLLVRILLLAA) form a helical membrane-spanning segment. Residues 70–89 (CISFVLAWFEEGEETVTAFV) lie on the Lumenal side of the membrane. A helical transmembrane segment spans residues 90–110 (EPFVILLILIANAIVGVWQER). At 111–253 (NAENAIEALK…QDKTPLQQKL (143 aa)) the chain is on the cytoplasmic side. The chain crosses the membrane as a helical span at residues 254–273 (DEFGEQLSKVISLICVAVWL). The Lumenal portion of the chain corresponds to 274–295 (INIGHFNDPVHGGSWFRGAIYY). Residues 296–313 (FKIAVALAVAAIPEGLPA) form a helical membrane-spanning segment. Ca(2+)-binding residues include valine 304, alanine 305, isoleucine 307, and glutamate 309. The Cytoplasmic segment spans residues 314-757 (VITTCLALGT…EEGRAIYNNM (444 aa)). Catalysis depends on aspartate 351, which acts as the 4-aspartylphosphate intermediate. Residues aspartate 351 and threonine 353 each coordinate Mg(2+). ATP is bound at residue threonine 353. Threonine 441 carries the phosphothreonine modification. ATP is bound by residues glutamate 442, arginine 489, lysine 515, and arginine 560. The residue at position 569 (threonine 569) is a Phosphothreonine. Residue serine 581 is modified to Phosphoserine. 3 residues coordinate ATP: threonine 625, glycine 626, and aspartate 627. At serine 643 the chain carries Phosphoserine. Arginine 678 and lysine 684 together coordinate ATP. Position 703 (aspartate 703) interacts with Mg(2+). Asparagine 706 provides a ligand contact to ATP. Residues 758-777 (KQFIRYLISSNVGEVVCIFL) traverse the membrane as a helical segment. 2 residues coordinate Ca(2+): asparagine 768 and glutamate 771. The Lumenal portion of the chain corresponds to 778–787 (TAALGLPEAL). The chain crosses the membrane as a helical span at residues 788-808 (IPVQLLWVNLVTDGLPATALG). Residues 788 to 808 (IPVQLLWVNLVTDGLPATALG) form an interaction with PLN region. Ca(2+) is bound by residues asparagine 796, threonine 799, and aspartate 800. Over 809 to 828 (FNPPDLDIMDRPPRSPKEPL) the chain is Cytoplasmic. The chain crosses the membrane as a helical span at residues 829–851 (ISGWLFFRYMAIGGYVGAATVGA). Residues 852–897 (AAWWFLYAEDGPHVSYHQLTHFMQCTEHNPEFDGLDCEVFEAPEPM) are Lumenal-facing. Cysteine 876 and cysteine 888 are joined by a disulfide. A helical membrane pass occupies residues 898-917 (TMALSVLVTIEMCNALNSLS). Position 908 (glutamate 908) interacts with Ca(2+). Over 918-930 (ENQSLLRMPPWVN) the chain is Cytoplasmic. A helical transmembrane segment spans residues 931–949 (IWLLGSICLSMSLHFLILY). The tract at residues 932-943 (WLLGSICLSMSL) is interaction with PLN. Topologically, residues 950–964 (VDPLPMIFKLRALDF) are lumenal. A helical membrane pass occupies residues 965–985 (TQWLMVLKISLPVIGLDELLK). Residues 986–994 (FIARNYLEG) lie on the Cytoplasmic side of the membrane.

This sequence belongs to the cation transport ATPase (P-type) (TC 3.A.3) family. Type IIA subfamily. In terms of assembly, interacts with sarcolipin (SLN). Interacts with phospholamban (PLN). Interacts with myoregulin (MRLN). Interacts with DWORF. Interacts with VMP1. Requires Mg(2+) as cofactor.

It is found in the endoplasmic reticulum membrane. It localises to the sarcoplasmic reticulum membrane. It carries out the reaction Ca(2+)(in) + ATP + H2O = Ca(2+)(out) + ADP + phosphate + H(+). With respect to regulation, inhibited by sarcolipin (SLN) and myoregulin (MRLN). Has also been shown to be reversibly inhibited by phospholamban (PLN) at low calcium concentrations in vitro. Dephosphorylated PLN decreases the apparent affinity of the ATPase for calcium in vitro and this inhibition is regulated by the phosphorylation of PLN. Enhanced by DWORF; DWORF increases activity by displacing sarcolipin (SLN), phospholamban (PLN) and myoregulin (MRLN). In terms of biological role, key regulator of striated muscle performance by acting as the major Ca(2+) ATPase responsible for the reuptake of cytosolic Ca(2+) into the sarcoplasmic reticulum. Catalyzes the hydrolysis of ATP coupled with the translocation of calcium from the cytosol to the sarcoplasmic reticulum lumen. Contributes to calcium sequestration involved in muscular excitation/contraction. The protein is Sarcoplasmic/endoplasmic reticulum calcium ATPase 1 (Atp2a1) of Mus musculus (Mouse).